The chain runs to 662 residues: PAN2-PAN3 deadenylation complex subunit PAN3 (662 aa).

Disordered regions lie at residues 1 to 29 (MASAGKPALDDSRRGTGSPKIKGRENAKD) and 53 to 133 (DPHK…DTVT). The C3H1-type zinc finger occupies 26–55 (NAKDTLCRNITIYGRCRYEDKGCAFNHDPH). Residues 75–102 (SFTPSLLSSNGSSPTSTPATTKKMTTIS) are compositionally biased toward low complexity. Polar residues predominate over residues 115 to 133 (SVVSRSNASTPGLRQDTVT). Positions 263 to 525 (QTLPNTQLPA…NIDVFITGIS (263 aa)) are pseudokinase domain. Residues R315, 364-371 (DYHPLSKT), and 425-426 (SK) each bind ATP. A coiled-coil region spans residues 526–564 (SQLMSTFDSALHLDDQLTSDLSRELENGRLVRLMAKLNF). The interval 565-662 (VNERPEYEHD…ALMKPARRMH (98 aa)) is knob domain.

This sequence belongs to the protein kinase superfamily. PAN3 family. In terms of assembly, homodimer. Forms a heterotrimer with a catalytic subunit pan2 to form the poly(A)-nuclease (PAN) deadenylation complex. Interacts (via PAM-2 motif) with poly(A)-binding protein pab1 (via PABC domain), conferring substrate specificity of the enzyme complex.

The protein localises to the cytoplasm. Functionally, regulatory subunit of the poly(A)-nuclease (PAN) deadenylation complex, one of two cytoplasmic mRNA deadenylases involved in mRNA turnover. PAN specifically shortens poly(A) tails of RNA and the activity is stimulated by poly(A)-binding protein pab1. PAN deadenylation is followed by rapid degradation of the shortened mRNA tails by the CCR4-NOT complex. Deadenylated mRNAs are then degraded by two alternative mechanisms, namely exosome-mediated 3'-5' exonucleolytic degradation, or deadenylation-dependent mRNA decaping and subsequent 5'-3' exonucleolytic degradation by xrn1. May also be involved in post-transcriptional maturation of mRNA poly(A) tails. pan3 acts as a positive regulator for PAN activity, recruiting the catalytic subunit pan2 to mRNA via its interaction with RNA and with pab1. In Aspergillus fumigatus (strain ATCC MYA-4609 / CBS 101355 / FGSC A1100 / Af293) (Neosartorya fumigata), this protein is PAN2-PAN3 deadenylation complex subunit PAN3.